The following is a 434-amino-acid chain: Gamma-enolase (434 aa).

Residue S2 is modified to N-acetylserine. K5 carries the N6-acetyllysine modification. Residue T26 is modified to Phosphothreonine. Position 40 (S40) interacts with Mg(2+). Residue Y44 is modified to Phosphotyrosine. The residue at position 60 (K60) is an N6-acetyllysine; alternate. Residue K60 is modified to N6-succinyllysine; alternate. K64 is subject to N6-acetyllysine. K89 carries the post-translational modification N6-acetyllysine; alternate. An N6-succinyllysine; alternate modification is found at K89. Substrate contacts are provided by H158 and E167. N6-acetyllysine is present on residues K193, K197, and K199. K202 bears the N6-acetyllysine; alternate mark. A Glycyl lysine isopeptide (Lys-Gly) (interchain with G-Cter in SUMO2); alternate cross-link involves residue K202. Catalysis depends on E210, which acts as the Proton donor. K228 and K233 each carry N6-acetyllysine; alternate. Position 228 is an N6-succinyllysine; alternate (K228). K233 bears the N6-(2-hydroxyisobutyryl)lysine; alternate mark. D245 is a binding site for Mg(2+). Position 256 is an N6-acetyllysine (K256). S263 is modified (phosphoserine). Y287 carries the phosphotyrosine modification. The residue at position 291 (S291) is a Phosphoserine. Residues E293 and D318 each contribute to the Mg(2+) site. Substrate contacts are provided by E293 and D318. N6-acetyllysine is present on residues K335 and K343. Residue K343 is the Proton acceptor of the active site. Substrate contacts are provided by residues 370–373 and K394; that span reads SHRS. Position 406 is an N6-acetyllysine (K406).

This sequence belongs to the enolase family. In terms of assembly, mammalian enolase is composed of 3 isozyme subunits, alpha, beta and gamma, which can form homodimers or heterodimers which are cell-type and development-specific. Requires Mg(2+) as cofactor. As to expression, skeletal muscle (at protein level). The alpha/alpha homodimer is expressed in embryo and in most adult tissues. The alpha/beta heterodimer and the beta/beta homodimer are found in striated muscle, and the alpha/gamma heterodimer and the gamma/gamma homodimer in neurons.

It is found in the cytoplasm. The protein localises to the cell membrane. It catalyses the reaction (2R)-2-phosphoglycerate = phosphoenolpyruvate + H2O. It participates in carbohydrate degradation; glycolysis; pyruvate from D-glyceraldehyde 3-phosphate: step 4/5. In terms of biological role, has neurotrophic and neuroprotective properties on a broad spectrum of central nervous system (CNS) neurons. Binds, in a calcium-dependent manner, to cultured neocortical neurons and promotes cell survival. This Mus musculus (Mouse) protein is Gamma-enolase (Eno2).